Here is a 578-residue protein sequence, read N- to C-terminus: Proline--tRNA ligase (578 aa).

The protein belongs to the class-II aminoacyl-tRNA synthetase family. ProS type 1 subfamily. Homodimer.

Its subcellular location is the cytoplasm. The enzyme catalyses tRNA(Pro) + L-proline + ATP = L-prolyl-tRNA(Pro) + AMP + diphosphate. Functionally, catalyzes the attachment of proline to tRNA(Pro) in a two-step reaction: proline is first activated by ATP to form Pro-AMP and then transferred to the acceptor end of tRNA(Pro). As ProRS can inadvertently accommodate and process non-cognate amino acids such as alanine and cysteine, to avoid such errors it has two additional distinct editing activities against alanine. One activity is designated as 'pretransfer' editing and involves the tRNA(Pro)-independent hydrolysis of activated Ala-AMP. The other activity is designated 'posttransfer' editing and involves deacylation of mischarged Ala-tRNA(Pro). The misacylated Cys-tRNA(Pro) is not edited by ProRS. The polypeptide is Proline--tRNA ligase (Burkholderia ambifaria (strain MC40-6)).